A 417-amino-acid chain; its full sequence is GTP-binding protein YPT11 (417 aa).

Residues 1–34 form a disordered region; sequence MSQRKRYSLNVVTSPSIPSPTPSAPIRTNESNWE. Residues 97-104, 228-232, and 292-295 each bind GTP; these read GDANVGKT, DTAGQ, and NKID. Residues cysteine 415 and cysteine 416 are each lipidated (S-geranylgeranyl cysteine).

It belongs to the small GTPase superfamily. Rab family. In terms of assembly, interacts with MYO2 (via C-terminal tail domain). Interacts with YIF1, YIP3, YIP4 and YIP5.

The protein localises to the endoplasmic reticulum membrane. It localises to the bud tip. It is found in the bud neck. In terms of biological role, involved in the positive control of both endoplasmic reticulum (ER) and mitochondrion inheritance during cell divison. Required for the MYO2-dependent retention of newly inherited mitochondria at the bud tip in developing daughter cells. In Saccharomyces cerevisiae (strain AWRI1631) (Baker's yeast), this protein is GTP-binding protein YPT11 (YPT11).